Here is a 401-residue protein sequence, read N- to C-terminus: Argininosuccinate synthase (401 aa).

Residues 11 to 19 (AYSGGLDTS) and A38 contribute to the ATP site. 2 residues coordinate L-citrulline: Y89 and S94. G119 provides a ligand contact to ATP. Positions 121, 125, and 126 each coordinate L-aspartate. N125 serves as a coordination point for L-citrulline. Positions 129, 177, 186, 262, and 274 each coordinate L-citrulline.

This sequence belongs to the argininosuccinate synthase family. Type 1 subfamily. As to quaternary structure, homotetramer.

The protein localises to the cytoplasm. It carries out the reaction L-citrulline + L-aspartate + ATP = 2-(N(omega)-L-arginino)succinate + AMP + diphosphate + H(+). It functions in the pathway amino-acid biosynthesis; L-arginine biosynthesis; L-arginine from L-ornithine and carbamoyl phosphate: step 2/3. The protein is Argininosuccinate synthase of Nitratidesulfovibrio vulgaris (strain DSM 19637 / Miyazaki F) (Desulfovibrio vulgaris).